The following is a 385-amino-acid chain: Linearmycin resistance permease protein LnrN (385 aa).

A run of 6 helical transmembrane segments spans residues Y22–G42, A198–L218, I239–L259, A274–I294, L305–I325, and D360–L380. Residues K163 to A382 form the ABC transmembrane type-2 domain.

It belongs to the ABC-2 integral membrane protein family. As to quaternary structure, the complex is composed of two ATP-binding proteins (LnrL) and two transmembrane proteins (LnrM and LnrN).

It localises to the cell membrane. Required for resistance to linearmycins, a family of antibiotic-specialized metabolites produced by some streptomycetes. Part of the ABC transporter complex LnrLMN that probably facilitates linearmycin removal from the membrane. Responsible for the translocation of the substrate across the membrane. Also mediates KinC-dependent biofilm morphology. In Bacillus subtilis (strain 168), this protein is Linearmycin resistance permease protein LnrN.